A 360-amino-acid polypeptide reads, in one-letter code: Phospho-N-acetylmuramoyl-pentapeptide-transferase (360 aa).

Transmembrane regions (helical) follow at residues 25–45, 73–93, 97–117, 132–152, 168–188, 199–219, 236–256, 263–283, 288–308, and 339–359; these read RAILGVLTALGLSMVLGPWVI, TMGGTLILFSIVTATLLWADL, YVLAVLFVTITFGLIGWVDDY, WKYFWQSACGFIVAIALFVTA, VAWQMGVLYVFVTYLMIVGFS, GLAIMPTVMVGSALGVIAYLV, SGELVVYCAALAGAGLGFLWF, VFMGDVGALALGAALGVIAVI, IVFFIMSGIFVMETVSVILQV, and IVRFWIITVILVLFGLATLKI.

It belongs to the glycosyltransferase 4 family. MraY subfamily. Mg(2+) is required as a cofactor.

Its subcellular location is the cell inner membrane. It catalyses the reaction UDP-N-acetyl-alpha-D-muramoyl-L-alanyl-gamma-D-glutamyl-meso-2,6-diaminopimeloyl-D-alanyl-D-alanine + di-trans,octa-cis-undecaprenyl phosphate = di-trans,octa-cis-undecaprenyl diphospho-N-acetyl-alpha-D-muramoyl-L-alanyl-D-glutamyl-meso-2,6-diaminopimeloyl-D-alanyl-D-alanine + UMP. It functions in the pathway cell wall biogenesis; peptidoglycan biosynthesis. Functionally, catalyzes the initial step of the lipid cycle reactions in the biosynthesis of the cell wall peptidoglycan: transfers peptidoglycan precursor phospho-MurNAc-pentapeptide from UDP-MurNAc-pentapeptide onto the lipid carrier undecaprenyl phosphate, yielding undecaprenyl-pyrophosphoryl-MurNAc-pentapeptide, known as lipid I. The polypeptide is Phospho-N-acetylmuramoyl-pentapeptide-transferase (Teredinibacter turnerae (strain ATCC 39867 / T7901)).